The primary structure comprises 477 residues: Bifunctional protein HldE (477 aa).

The interval methionine 1–threonine 321 is ribokinase. Asparagine 198–glutamate 201 lines the ATP pocket. Aspartate 266 is an active-site residue. The cytidylyltransferase stretch occupies residues phenylalanine 348 to valine 477.

In the N-terminal section; belongs to the carbohydrate kinase PfkB family. It in the C-terminal section; belongs to the cytidylyltransferase family. In terms of assembly, homodimer.

It carries out the reaction D-glycero-beta-D-manno-heptose 7-phosphate + ATP = D-glycero-beta-D-manno-heptose 1,7-bisphosphate + ADP + H(+). The catalysed reaction is D-glycero-beta-D-manno-heptose 1-phosphate + ATP + H(+) = ADP-D-glycero-beta-D-manno-heptose + diphosphate. Its pathway is nucleotide-sugar biosynthesis; ADP-L-glycero-beta-D-manno-heptose biosynthesis; ADP-L-glycero-beta-D-manno-heptose from D-glycero-beta-D-manno-heptose 7-phosphate: step 1/4. The protein operates within nucleotide-sugar biosynthesis; ADP-L-glycero-beta-D-manno-heptose biosynthesis; ADP-L-glycero-beta-D-manno-heptose from D-glycero-beta-D-manno-heptose 7-phosphate: step 3/4. Catalyzes the phosphorylation of D-glycero-D-manno-heptose 7-phosphate at the C-1 position to selectively form D-glycero-beta-D-manno-heptose-1,7-bisphosphate. Its function is as follows. Catalyzes the ADP transfer from ATP to D-glycero-beta-D-manno-heptose 1-phosphate, yielding ADP-D-glycero-beta-D-manno-heptose. This is Bifunctional protein HldE from Sulfurimonas denitrificans (strain ATCC 33889 / DSM 1251) (Thiomicrospira denitrificans (strain ATCC 33889 / DSM 1251)).